The primary structure comprises 118 residues: NADH-quinone oxidoreductase subunit A 2 (118 aa).

The next 3 helical transmembrane spans lie at 5 to 25 (YLPIIVLVVVAVLFGCGSLIF), 62 to 82 (IIAMLFILFDIEAVFLYPWAV), and 87 to 107 (LGMFGLMEMGVFIVILFVGYI).

It belongs to the complex I subunit 3 family. As to quaternary structure, NDH-1 is composed of 14 different subunits. Subunits NuoA, H, J, K, L, M, N constitute the membrane sector of the complex.

Its subcellular location is the cell inner membrane. The enzyme catalyses a quinone + NADH + 5 H(+)(in) = a quinol + NAD(+) + 4 H(+)(out). In terms of biological role, NDH-1 shuttles electrons from NADH, via FMN and iron-sulfur (Fe-S) centers, to quinones in the respiratory chain. The immediate electron acceptor for the enzyme in this species is believed to be ubiquinone. Couples the redox reaction to proton translocation (for every two electrons transferred, four hydrogen ions are translocated across the cytoplasmic membrane), and thus conserves the redox energy in a proton gradient. The protein is NADH-quinone oxidoreductase subunit A 2 of Geotalea uraniireducens (strain Rf4) (Geobacter uraniireducens).